Reading from the N-terminus, the 445-residue chain is Probable fructoselysine/psicoselysine transporter FrlA (445 aa).

A run of 12 helical transmembrane segments spans residues 10–30 (LGFW…GIFV), 38–58 (AAGT…IVIP), 93–113 (GWAS…LAIV), 121–141 (PIDP…FMLL), 155–175 (LITI…IFWF), 181–201 (AAPT…LAGI), 236–256 (CLLV…LMPF), 273–293 (IPAL…IVIL), 334–354 (IILQ…TSLL), 355–375 (GYFT…IIWC), 389–410 (AFGL…STFV), and 417–435 (LICA…AFWA).

This sequence belongs to the amino acid-polyamine-organocation (APC) superfamily.

The protein localises to the cell inner membrane. It carries out the reaction N(6)-(D-fructosyl)-L-lysine(in) = N(6)-(D-fructosyl)-L-lysine(out). It catalyses the reaction N(6)-(D-psicosyl)-L-lysine(in) = N(6)-(D-psicosyl)-L-lysine(out). It participates in carbohydrate metabolism; fructoselysine degradation. Its function is as follows. Is likely involved in the transport of fructoselysine and psicoselysine to the cytoplasm, where they are degraded. This is Probable fructoselysine/psicoselysine transporter FrlA from Escherichia coli (strain K12).